Consider the following 351-residue polypeptide: Carbamoyl phosphate synthase small chain (351 aa).

The segment at 1–171 (MKGIIYLEDG…IIHIAGNGNK (171 aa)) is CPSase. 3 residues coordinate L-glutamine: S45, G219, and G221. Residues 171 to 351 (KVAVMDFGIK…TYLFDQFVNL (181 aa)) form the Glutamine amidotransferase type-1 domain. Residue C246 is the Nucleophile of the active site. Residues L247, Q250, N288, G290, and Y291 each contribute to the L-glutamine site. Catalysis depends on residues H331 and E333.

This sequence belongs to the CarA family. As to quaternary structure, composed of two chains; the small (or glutamine) chain promotes the hydrolysis of glutamine to ammonia, which is used by the large (or ammonia) chain to synthesize carbamoyl phosphate. Tetramer of heterodimers (alpha,beta)4.

The catalysed reaction is hydrogencarbonate + L-glutamine + 2 ATP + H2O = carbamoyl phosphate + L-glutamate + 2 ADP + phosphate + 2 H(+). It carries out the reaction L-glutamine + H2O = L-glutamate + NH4(+). Its pathway is amino-acid biosynthesis; L-arginine biosynthesis; carbamoyl phosphate from bicarbonate: step 1/1. The protein operates within pyrimidine metabolism; UMP biosynthesis via de novo pathway; (S)-dihydroorotate from bicarbonate: step 1/3. Functionally, small subunit of the glutamine-dependent carbamoyl phosphate synthetase (CPSase). CPSase catalyzes the formation of carbamoyl phosphate from the ammonia moiety of glutamine, carbonate, and phosphate donated by ATP, constituting the first step of 2 biosynthetic pathways, one leading to arginine and/or urea and the other to pyrimidine nucleotides. The small subunit (glutamine amidotransferase) binds and cleaves glutamine to supply the large subunit with the substrate ammonia. The chain is Carbamoyl phosphate synthase small chain from Clostridium acetobutylicum (strain ATCC 824 / DSM 792 / JCM 1419 / IAM 19013 / LMG 5710 / NBRC 13948 / NRRL B-527 / VKM B-1787 / 2291 / W).